An 86-amino-acid chain; its full sequence is Small ribosomal subunit protein uS17 (86 aa).

Belongs to the universal ribosomal protein uS17 family. As to quaternary structure, part of the 30S ribosomal subunit.

One of the primary rRNA binding proteins, it binds specifically to the 5'-end of 16S ribosomal RNA. The chain is Small ribosomal subunit protein uS17 from Nitrosococcus oceani (strain ATCC 19707 / BCRC 17464 / JCM 30415 / NCIMB 11848 / C-107).